The sequence spans 163 residues: ATP synthase subunit b 1 (163 aa).

The chain crosses the membrane as a helical span at residues 7 to 27 (AETWVAVAFVILMALFAYLGV).

This sequence belongs to the ATPase B chain family. In terms of assembly, F-type ATPases have 2 components, F(1) - the catalytic core - and F(0) - the membrane proton channel. F(1) has five subunits: alpha(3), beta(3), gamma(1), delta(1), epsilon(1). F(0) has three main subunits: a(1), b(2) and c(10-14). The alpha and beta chains form an alternating ring which encloses part of the gamma chain. F(1) is attached to F(0) by a central stalk formed by the gamma and epsilon chains, while a peripheral stalk is formed by the delta and b chains.

It localises to the cell inner membrane. In terms of biological role, f(1)F(0) ATP synthase produces ATP from ADP in the presence of a proton or sodium gradient. F-type ATPases consist of two structural domains, F(1) containing the extramembraneous catalytic core and F(0) containing the membrane proton channel, linked together by a central stalk and a peripheral stalk. During catalysis, ATP synthesis in the catalytic domain of F(1) is coupled via a rotary mechanism of the central stalk subunits to proton translocation. Component of the F(0) channel, it forms part of the peripheral stalk, linking F(1) to F(0). This chain is ATP synthase subunit b 1, found in Rhodopseudomonas palustris (strain BisB5).